Consider the following 792-residue polypeptide: MKKRQSQTPQEYTAEAIKAVSGLEHVRLRPAMYIGDIGERGLHHLIWEILDNAVDEAVAGYARNISVTIHRDNSVTVEDDGRGIPVDIHPETGKPAVEMVFTMLGAGGKFEKKVYTYSGGLHGVGASVVNALSEWLIVEVYRDGKIYRMAFKRGEVVEPLHVVGETKKRGTKVSFKPDPEIFETTEIKFDIVEKRVRELAYLNPEVKFELTDERLGKHLIYKFDRGIEELVKYLNEGKEPLFKDIIRIQGEKEGVIVDIAFQYVKDYKERIESFVNNIKTVEGGTHVTGFRSGLSKAVIRMAQGLKLAKELKKSFTGEDVREGLTAVVACKVPNPQFEGQTKTKLGNQNVKQIVESITYDFLTSYFEKKRDVLKAIVEKAIEAALAREAAKKAKELVRRKSPLEEGVLPGKLADCSETDPSKCEIFLVEGDSAGGSAKQARDRRYQAILPLRGKIINVEKARIDKVLSNDEIKAIVSALGCGIGEDLDLKKLRYHKIILMTDADVDGSHIRTLLLTFFYRFMPKLVEEGYVYIAEPPLYRVKKGKKEIYIKDDKEFEHFLLNEIREKGRLVDAREKEFKGEELVRLLIDLKDYEDAYRALVKSKGENLVNFLLTHRVREEDLRNPARVKEITHLMEEELGDYRVDTKYNELEGAYDIIFYDDKLGTKTIIDVNFLSSLSYREVLEGIHLHLPVQVFFENKKVEINSLGEIYDKFMDFARSGMEVQRYKGLGEMNPEQLWETTMNPKTRRLKKVKIEDAAEADRIFTILMGEQVEPRREFIEAYAKEVKHLDV.

The Toprim domain maps to 423 to 537; it reads CEIFLVEGDS…EGYVYIAEPP (115 aa). The Mg(2+) site is built by Glu429, Asp502, and Asp504.

This sequence belongs to the type II topoisomerase GyrB family. In terms of assembly, heterotetramer, composed of two GyrA and two GyrB chains. In the heterotetramer, 'GyrA' contains the active site tyrosine that forms a transient covalent intermediate with DNA, while 'GyrB' binds cofactors and catalyzes ATP hydrolysis. It depends on Mg(2+) as a cofactor. Requires Mn(2+) as cofactor. Ca(2+) is required as a cofactor.

The protein localises to the cytoplasm. It carries out the reaction ATP-dependent breakage, passage and rejoining of double-stranded DNA.. Functionally, a type II topoisomerase. Despite its similarity to DNA gyrase, this enzyme is not able to supercoil DNA, and instead acts like topoisomerase IV. Relaxes both positively and negatively supercoiled DNA in an ATP-dependent fashion, decatenates interlocked circles. If this subunit is reconstituted with GyrA from E.coli the hybrid enzyme supercoils relaxed plasmid DNA; if paired with E.coli ParC supercoiling is not restored. This the first bacteria shown to not contain DNA gyrase, although it has 2 copies of a reverse gyrase that introduces positive supercoils. Type II topoisomerases break and join 2 DNA strands simultaneously in an ATP-dependent manner. In Aquifex aeolicus (strain VF5), this protein is Type 2 topoisomerase subunit B.